We begin with the raw amino-acid sequence, 153 residues long: Sec-independent protein translocase protein TatB (153 aa).

The helical transmembrane segment at 1 to 21 (MFGISFSELLLVGLVALLVLG) threads the bilayer. Positions 78-153 (MFAQNQHPET…HDSSLPPRAP (76 aa)) are disordered.

The protein belongs to the TatB family. As to quaternary structure, the Tat system comprises two distinct complexes: a TatABC complex, containing multiple copies of TatA, TatB and TatC subunits, and a separate TatA complex, containing only TatA subunits. Substrates initially bind to the TatABC complex, which probably triggers association of the separate TatA complex to form the active translocon.

Its subcellular location is the cell inner membrane. Functionally, part of the twin-arginine translocation (Tat) system that transports large folded proteins containing a characteristic twin-arginine motif in their signal peptide across membranes. Together with TatC, TatB is part of a receptor directly interacting with Tat signal peptides. TatB may form an oligomeric binding site that transiently accommodates folded Tat precursor proteins before their translocation. The chain is Sec-independent protein translocase protein TatB from Pseudomonas savastanoi pv. phaseolicola (strain 1448A / Race 6) (Pseudomonas syringae pv. phaseolicola (strain 1448A / Race 6)).